The primary structure comprises 627 residues: MIYDYGYDVIVVGGGHAGVEAASASARIGAKTLLLTHNIDTIGQMSCNPAIGGIGKGHLVKEIDAMGGVMAKAIDMAGIQFRILNSRKGPAVRATRAQADRVLYKKAINSLINNQENLDIFQDSVDDLVVENNTVCGAITKTGITFRAKKVVLTVGTFLGGKIHIGKVSNAGGRAGDQPSNALAARLRSLPFRVDRLKTGTPPRIDRRSVDFSVMEVQHGDNPTPYFSFFSKGKIEHPRQIPCYITYTNNETHKIITDNLDKSAMYSGLIEGIGPRYCPSIEDKVVRFADKERHQIFVEPEGLNSIELYPNGLSTSLPFEVQCNYIRSIKGFEKAFIMRPGYAIEYDFFDPRDLKPTLETKHIKNLYFAGQINGTTGYEEAGAQGLVASINAAISIDSDKSWYPTRADSYIGVLIDDLITKGTKEPYRMFTSRAEYRLILREDNADLRLSDKACELGLLSKEDQQHFISKKNAIIENIAMMKNTWIGPQTQKARDLEKFLDKKMTRESTLFDLLKRPEIDYSKLQQISELNLNLQDDAVIEQIEISAKYSGYIERQNKDIEKTATLEQKAIPTDFNYSQVKGLSNEVLQKLTEQKPTTLGEASRIPGITPAAISLLTIYMKKTGFIK.

Residues 13-18 (GGGHAG), Val-125, and Ser-180 contribute to the FAD site. Residue 274 to 288 (GPRYCPSIEDKVVRF) coordinates NAD(+). Gln-371 contributes to the FAD binding site.

The protein belongs to the MnmG family. As to quaternary structure, homodimer. Heterotetramer of two MnmE and two MnmG subunits. It depends on FAD as a cofactor.

It localises to the cytoplasm. In terms of biological role, NAD-binding protein involved in the addition of a carboxymethylaminomethyl (cmnm) group at the wobble position (U34) of certain tRNAs, forming tRNA-cmnm(5)s(2)U34. In Francisella tularensis subsp. holarctica (strain FTNF002-00 / FTA), this protein is tRNA uridine 5-carboxymethylaminomethyl modification enzyme MnmG.